Reading from the N-terminus, the 318-residue chain is 4-hydroxy-3-methylbut-2-enyl diphosphate reductase (318 aa).

[4Fe-4S] cluster is bound at residue cysteine 12. The (2E)-4-hydroxy-3-methylbut-2-enyl diphosphate site is built by histidine 41 and histidine 74. Dimethylallyl diphosphate is bound by residues histidine 41 and histidine 74. Isopentenyl diphosphate-binding residues include histidine 41 and histidine 74. Cysteine 96 lines the [4Fe-4S] cluster pocket. Histidine 124 contributes to the (2E)-4-hydroxy-3-methylbut-2-enyl diphosphate binding site. Dimethylallyl diphosphate is bound at residue histidine 124. An isopentenyl diphosphate-binding site is contributed by histidine 124. The Proton donor role is filled by glutamate 126. Residue threonine 167 coordinates (2E)-4-hydroxy-3-methylbut-2-enyl diphosphate. Cysteine 197 serves as a coordination point for [4Fe-4S] cluster. Serine 225, serine 226, asparagine 227, and serine 269 together coordinate (2E)-4-hydroxy-3-methylbut-2-enyl diphosphate. Dimethylallyl diphosphate-binding residues include serine 225, serine 226, asparagine 227, and serine 269. Residues serine 225, serine 226, asparagine 227, and serine 269 each contribute to the isopentenyl diphosphate site.

This sequence belongs to the IspH family. The cofactor is [4Fe-4S] cluster.

It catalyses the reaction isopentenyl diphosphate + 2 oxidized [2Fe-2S]-[ferredoxin] + H2O = (2E)-4-hydroxy-3-methylbut-2-enyl diphosphate + 2 reduced [2Fe-2S]-[ferredoxin] + 2 H(+). The enzyme catalyses dimethylallyl diphosphate + 2 oxidized [2Fe-2S]-[ferredoxin] + H2O = (2E)-4-hydroxy-3-methylbut-2-enyl diphosphate + 2 reduced [2Fe-2S]-[ferredoxin] + 2 H(+). It participates in isoprenoid biosynthesis; dimethylallyl diphosphate biosynthesis; dimethylallyl diphosphate from (2E)-4-hydroxy-3-methylbutenyl diphosphate: step 1/1. The protein operates within isoprenoid biosynthesis; isopentenyl diphosphate biosynthesis via DXP pathway; isopentenyl diphosphate from 1-deoxy-D-xylulose 5-phosphate: step 6/6. Its function is as follows. Catalyzes the conversion of 1-hydroxy-2-methyl-2-(E)-butenyl 4-diphosphate (HMBPP) into a mixture of isopentenyl diphosphate (IPP) and dimethylallyl diphosphate (DMAPP). Acts in the terminal step of the DOXP/MEP pathway for isoprenoid precursor biosynthesis. This is 4-hydroxy-3-methylbut-2-enyl diphosphate reductase from Francisella philomiragia subsp. philomiragia (strain ATCC 25017 / CCUG 19701 / FSC 153 / O#319-036).